Consider the following 401-residue polypeptide: Probable cysteine desulfurase (401 aa).

An N6-(pyridoxal phosphate)lysine modification is found at lysine 223.

It belongs to the class-V pyridoxal-phosphate-dependent aminotransferase family. Csd subfamily. It depends on pyridoxal 5'-phosphate as a cofactor.

The enzyme catalyses (sulfur carrier)-H + L-cysteine = (sulfur carrier)-SH + L-alanine. Catalyzes the removal of elemental sulfur and selenium atoms from L-cysteine, L-cystine, L-selenocysteine, and L-selenocystine to produce L-alanine. This Pseudomonas putida (strain ATCC 47054 / DSM 6125 / CFBP 8728 / NCIMB 11950 / KT2440) protein is Probable cysteine desulfurase (csdA).